The following is a 220-amino-acid chain: Probable GTP-binding protein EngB (220 aa).

One can recognise an EngB-type G domain in the interval 41 to 219 (DRSEVCFAGR…RAEIAALAML (179 aa)). GTP contacts are provided by residues 49 to 56 (GRSNVGKS), 76 to 80 (GRTRE), 96 to 99 (DLPG), 164 to 167 (TKVD), and 197 to 200 (MTSA). The Mg(2+) site is built by S56 and T78.

It belongs to the TRAFAC class TrmE-Era-EngA-EngB-Septin-like GTPase superfamily. EngB GTPase family. Mg(2+) serves as cofactor.

Its function is as follows. Necessary for normal cell division and for the maintenance of normal septation. This chain is Probable GTP-binding protein EngB, found in Hyphomonas neptunium (strain ATCC 15444).